The primary structure comprises 172 residues: Gastrula zinc finger protein XlCGF51.1A (172 aa).

6 C2H2-type zinc fingers span residues Phe-6–His-28, Leu-34–His-56, Phe-62–His-84, Phe-90–His-112, Leu-122–His-144, and Leu-150–His-172.

The protein belongs to the krueppel C2H2-type zinc-finger protein family.

Its subcellular location is the nucleus. Functionally, may be involved in transcriptional regulation. The polypeptide is Gastrula zinc finger protein XlCGF51.1A (Xenopus laevis (African clawed frog)).